The following is a 75-amino-acid chain: Large ribosomal subunit protein bL31 (75 aa).

This sequence belongs to the bacterial ribosomal protein bL31 family. Type A subfamily. As to quaternary structure, part of the 50S ribosomal subunit.

Functionally, binds the 23S rRNA. In Chlorobium luteolum (strain DSM 273 / BCRC 81028 / 2530) (Pelodictyon luteolum), this protein is Large ribosomal subunit protein bL31.